Reading from the N-terminus, the 296-residue chain is Probable DNA-directed RNA polymerase III subunit RPC6 (296 aa).

It belongs to the eukaryotic RPC34/RPC39 RNA polymerase subunit family.

The protein resides in the nucleus. Its function is as follows. DNA-dependent RNA polymerase catalyzes the transcription of DNA into RNA using the four ribonucleoside triphosphates as substrates. Specific peripheric component of RNA polymerase III which synthesizes small RNAs, such as 5S rRNA and tRNAs. The polypeptide is Probable DNA-directed RNA polymerase III subunit RPC6 (Caenorhabditis elegans).